Consider the following 407-residue polypeptide: 4-hydroxy-3-methylbut-2-en-1-yl diphosphate synthase (ferredoxin) (407 aa).

Positions 312, 315, 346, and 353 each coordinate [4Fe-4S] cluster.

The protein belongs to the IspG family. [4Fe-4S] cluster is required as a cofactor.

The enzyme catalyses (2E)-4-hydroxy-3-methylbut-2-enyl diphosphate + 2 oxidized [2Fe-2S]-[ferredoxin] + H2O = 2-C-methyl-D-erythritol 2,4-cyclic diphosphate + 2 reduced [2Fe-2S]-[ferredoxin] + H(+). Its pathway is isoprenoid biosynthesis; isopentenyl diphosphate biosynthesis via DXP pathway; isopentenyl diphosphate from 1-deoxy-D-xylulose 5-phosphate: step 5/6. Converts 2C-methyl-D-erythritol 2,4-cyclodiphosphate (ME-2,4cPP) into 1-hydroxy-2-methyl-2-(E)-butenyl 4-diphosphate. The chain is 4-hydroxy-3-methylbut-2-en-1-yl diphosphate synthase (ferredoxin) from Synechococcus elongatus (strain ATCC 33912 / PCC 7942 / FACHB-805) (Anacystis nidulans R2).